Here is a 112-residue protein sequence, read N- to C-terminus: Large ribosomal subunit protein uL24 (112 aa).

This sequence belongs to the universal ribosomal protein uL24 family. As to quaternary structure, part of the 50S ribosomal subunit.

Its function is as follows. One of two assembly initiator proteins, it binds directly to the 5'-end of the 23S rRNA, where it nucleates assembly of the 50S subunit. In terms of biological role, one of the proteins that surrounds the polypeptide exit tunnel on the outside of the subunit. The protein is Large ribosomal subunit protein uL24 of Desulfitobacterium hafniense (strain Y51).